The following is a 678-amino-acid chain: Vacuolar protein sorting-associated protein 1 (678 aa).

Positions 24-311 (LIDLPQITVV…LMHHIRNTLP (288 aa)) constitute a Dynamin-type G domain. Residues 34-41 (RSQSSGKS) form a G1 motif region. Residue 34 to 41 (RSQSSGKS) participates in GTP binding. Positions 60 to 62 (VTR) are G2 motif. The tract at residues 71–96 (NRPSASGKNEETTTDSDGKDQNNSSE) is disordered. Positions 78-90 (KNEETTTDSDGKD) are enriched in basic and acidic residues. A G3 motif region spans residues 153–156 (DLPG). Residues 153-157 (DLPGL) and 222-225 (TKVD) each bind GTP. The tract at residues 222–225 (TKVD) is G4 motif. Residues 252 to 255 (INRG) are G5 motif. One can recognise a GED domain in the interval 592 to 678 (TEVIKLLIMS…LQASEIVSNV (87 aa)).

Belongs to the TRAFAC class dynamin-like GTPase superfamily. Dynamin/Fzo/YdjA family.

In Schizosaccharomyces pombe (strain 972 / ATCC 24843) (Fission yeast), this protein is Vacuolar protein sorting-associated protein 1 (vps1).